A 33-amino-acid polypeptide reads, in one-letter code: Phosphoglycerate kinase (33 aa).

Residue Lys-13 participates in AMP binding. Lys-13 contributes to the ATP binding site.

This sequence belongs to the phosphoglycerate kinase family. Monomer. It depends on Mg(2+) as a cofactor.

The catalysed reaction is (2R)-3-phosphoglycerate + ATP = (2R)-3-phospho-glyceroyl phosphate + ADP. The protein is Phosphoglycerate kinase of Pseudotsuga menziesii (Douglas-fir).